Here is a 601-residue protein sequence, read N- to C-terminus: Aspartate--tRNA ligase (601 aa).

Glu183 serves as a coordination point for L-aspartate. An aspartate region spans residues 207–210; the sequence is QIFK. Arg229 is a binding site for L-aspartate. ATP contacts are provided by residues 229-231 and Gln238; that span reads RDE. His457 serves as a coordination point for L-aspartate. Glu497 provides a ligand contact to ATP. Arg504 contacts L-aspartate. Residue 549–552 coordinates ATP; that stretch reads GIDR.

It belongs to the class-II aminoacyl-tRNA synthetase family. Type 1 subfamily. As to quaternary structure, homodimer.

Its subcellular location is the cytoplasm. It carries out the reaction tRNA(Asp) + L-aspartate + ATP = L-aspartyl-tRNA(Asp) + AMP + diphosphate. In terms of biological role, catalyzes the attachment of L-aspartate to tRNA(Asp) in a two-step reaction: L-aspartate is first activated by ATP to form Asp-AMP and then transferred to the acceptor end of tRNA(Asp). This chain is Aspartate--tRNA ligase, found in Leptospira interrogans serogroup Icterohaemorrhagiae serovar Lai (strain 56601).